Here is a 209-residue protein sequence, read N- to C-terminus: ATP-dependent Clp protease proteolytic subunit (209 aa).

The Nucleophile role is filled by Ser113. His138 is an active-site residue.

Belongs to the peptidase S14 family. Fourteen ClpP subunits assemble into 2 heptameric rings which stack back to back to give a disk-like structure with a central cavity, resembling the structure of eukaryotic proteasomes.

The protein localises to the cytoplasm. The catalysed reaction is Hydrolysis of proteins to small peptides in the presence of ATP and magnesium. alpha-casein is the usual test substrate. In the absence of ATP, only oligopeptides shorter than five residues are hydrolyzed (such as succinyl-Leu-Tyr-|-NHMec, and Leu-Tyr-Leu-|-Tyr-Trp, in which cleavage of the -Tyr-|-Leu- and -Tyr-|-Trp bonds also occurs).. Functionally, cleaves peptides in various proteins in a process that requires ATP hydrolysis. Has a chymotrypsin-like activity. Plays a major role in the degradation of misfolded proteins. The polypeptide is ATP-dependent Clp protease proteolytic subunit (Blochmanniella floridana).